A 260-amino-acid polypeptide reads, in one-letter code: MAVISMKQLLEAGVHFGHQTRRWNPKMAKYIFTERNGIHVIDLQQTVKYADQAYDFIRDAAANDAIILFVGTKKQAAEAVKDEAERAGQYYINHRWLGGTLTNWSTIQKRVARLKEIKRMEEDGTFEVLPKKEVALLNKQRARLEKFLGGIEEMPRIPDVMYVVDPHKEQIAVKEAKKLGIPVVAMVDTNTDPDDIDVIIPSNDDAIRAVKLITAKMADAIIEGRQGEDSVESVEAELAATETQADSIEEIVEVVEGDNA.

It belongs to the universal ribosomal protein uS2 family.

In Streptococcus gordonii (strain Challis / ATCC 35105 / BCRC 15272 / CH1 / DL1 / V288), this protein is Small ribosomal subunit protein uS2.